Reading from the N-terminus, the 196-residue chain is dCTP deaminase (196 aa).

DCTP-binding positions include 113–118 (RSSLAR), Asp131, 139–141 (VLE), Tyr174, Lys181, and Gln185. Glu141 functions as the Proton donor/acceptor in the catalytic mechanism.

It belongs to the dCTP deaminase family. Homotrimer.

It catalyses the reaction dCTP + H2O + H(+) = dUTP + NH4(+). The protein operates within pyrimidine metabolism; dUMP biosynthesis; dUMP from dCTP (dUTP route): step 1/2. Catalyzes the deamination of dCTP to dUTP. This chain is dCTP deaminase, found in Wigglesworthia glossinidia brevipalpis.